Reading from the N-terminus, the 185-residue chain is Ribulose bisphosphate carboxylase small subunit, chloroplastic 2 (185 aa).

The N-terminal 45 residues, 1-45 (MAAVIAKSSVSAAVARPARSSVRPMAALKPAVKAAPVAAPAQANQ), are a transit peptide targeting the chloroplast. An N-methylmethionine modification is found at Met46.

It belongs to the RuBisCO small chain family. Heterohexadecamer of 8 large and 8 small subunits.

It localises to the plastid. It is found in the chloroplast. The protein localises to the chloroplast stroma. In terms of biological role, ruBisCO catalyzes two reactions: the carboxylation of D-ribulose 1,5-bisphosphate, the primary event in carbon dioxide fixation, as well as the oxidative fragmentation of the pentose substrate. Both reactions occur simultaneously and in competition at the same active site. Although the small subunit is not catalytic it is essential for maximal activity. This chain is Ribulose bisphosphate carboxylase small subunit, chloroplastic 2, found in Chlamydomonas reinhardtii (Chlamydomonas smithii).